The following is a 1668-amino-acid chain: MSKIRRKVTVENTKTISDSTSRRPSVFERLGPSTGSTAETQCRNWLKTGNCLYGNTCRFVHGPSPRGKGYSSNYRRSPERPTGDLRERMKNKRQDVDTEPQKRNTEESSSPVRKESSRGRHREKEDIKITKERTPESEEENVEWETNRDDSDNGDINYDYVHELSLEMKRQKIQRELMKLEQENMEKREEIIIKKEVSPEVVRSKLSPSPSLRKSSKSPKRKSSPKSSSASKKDRKTSAVSSPLLDQQRNSKTNQSKKKGPRTPSPPPPIPEDIALGKKYKEKYKVKDRIEEKTRDGKDRGRDFERQREKRDKPRSTSPAGQHHSPISSRHHSSSSQSGSSIQRHSPSPRRKRTPSPSYQRTLTPPLRRSASPYPSHSLSSPQRKQSPPRHRSPMREKGRHDHERTSQSHDRRHERREDTRGKRDREKDSREEREYEQDQSSSRDHRDDREPRDGRDRRDARDTRDRRELRDSRDMRDSREMRDYSRDTKESRDPRDSRSTRDAHDYRDREGRDTHRKEDTYPEESRSYGRNHLREESSRTEIRNESRNESRSEIRNDRMGRSRGRVPELPEKGSRGSRGSQIDSHSSNSNYHDSWETRSSYPERDRYPERDNRDQARDSSFERRHGERDRRDNRERDQRPSSPIRHQGRNDELERDERREERRVDRVDDRRDERARERDRERERDRERERERERERDREREKERELERERAREREREREKERDRERDRDRDHDRERERERERDREKEREREREERERERERERERERERERERERARERDKERERQRDWEDKDKGRDDRREKREEIREDRNPRDGHDERKSKKRYRNEGSPSPRQSPKRRREHSPDSDAYNSGDDKNEKHRLLSQVVRPQESRSLSPSHLTEDRQGRWKEEDRKPERKESSRRYEEQELKEKVSSVDKQREQTEILESSRMRAQDIIGHHQSEDRETSDRAHDENKKKAKIQKKPIKKKKEDDVGIERGNIETTSEDGQVFSPKKGQKKKSIEKKRKKSKGDSDISDEEAAQQSKKKRGPRTPPITTKEELVEMCNGKNGILEDSQKKEDTAFSDWSDEDVPDRTEVTEAEHTATATTPGSTPSPLSSLLPPPPPVATATATTVPATLAATTAAAATSFSTSAITISTSATPTNTTNNTFANEDSHRKCHRTRVEKVETPHVTIEDAQHRKPMDQKRSSSLGSNRSNRSHTSGRLRSPSNDSAHRSGDDQSGRKRVLHSGSRDREKTKSLEITGERKSRIDQLKRGEPSRSTSSDRQDSRSHSSRRSSPESDRQVHSRSGSFDSRDRLQERDRYEHDRERERERRDTRQREWDRDADKDWPRNRDRDRLRERERERERDKRRDLDRERERLISDSVERDRDRDRDRTFESSQIESVKRCEAKLEGEHERDLESTSRDSLALDKERMDKDLGSVQGFEETNKSERTESLEGDDESKLDDAHSLGSGAGEGYEPISDDELDEILAGDAEKREDQQDEEKMPDPLDVIDVDWSGLMPKHPKEPREPGAALLKFTPGAVMLRVGISKKLAGSELFAKVKETCQRLLEKPKDADNLFEHELGALNMAALLRKEERASLLSNLGPCCKALCFRRDSAIRKQLVKNEKGTIKQAYTSAPMVDNELLRLSLRLFKRKTTCHAPGHEKTEDNKLSQSSIQQELCVS.

Disordered stretches follow at residues 1–38 and 56–157; these read MSKI…GSTA and TCRF…GDIN. Residues 10 to 23 show a composition bias toward polar residues; sequence VENTKTISDSTSRR. The C3H1-type zinc-finger motif lies at 36 to 64; it reads STAETQCRNWLKTGNCLYGNTCRFVHGPS. Phosphoserine occurs at positions 64 and 77. The segment covering 76-136 has biased composition (basic and acidic residues); sequence RSPERPTGDL…IKITKERTPE (61 aa). Glycyl lysine isopeptide (Lys-Gly) (interchain with G-Cter in SUMO2) cross-links involve residues lysine 179 and lysine 194. Disordered stretches follow at residues 190 to 1112 and 1125 to 1466; these read EIII…TATA and AAAT…PISD. A phosphoserine mark is found at serine 198, serine 207, serine 209, and serine 211. Residues 204 to 213 are compositionally biased toward low complexity; sequence SKLSPSPSLR. Basic residues predominate over residues 214–224; the sequence is KSSKSPKRKSS. A Phosphothreonine modification is found at threonine 237. A phosphoserine mark is found at serine 238 and serine 242. Over residues 239 to 254 the composition is skewed to polar residues; that stretch reads AVSSPLLDQQRNSKTN. The residue at position 263 (threonine 263) is a Phosphothreonine. Serine 265 is modified (phosphoserine). Residues 283–315 show a composition bias toward basic and acidic residues; sequence KYKVKDRIEEKTRDGKDRGRDFERQREKRDKPR. 4 positions are modified to phosphoserine: serine 316, serine 318, serine 325, and serine 328. Positions 323-346 are enriched in low complexity; that stretch reads HHSPISSRHHSSSSQSGSSIQRHS. Residues threonine 354 and threonine 364 each carry the phosphothreonine modification. Serine 370, serine 372, and serine 381 each carry phosphoserine. The span at 370–382 shows a compositional bias: low complexity; the sequence is SASPYPSHSLSSP. 2 stretches are compositionally biased toward basic and acidic residues: residues 394–434 and 442–575; these read PMRE…REER and SSRD…EKGS. A compositionally biased stretch (low complexity) spans 584–593; the sequence is DSHSSNSNYH. Positions 594–640 are enriched in basic and acidic residues; sequence DSWETRSSYPERDRYPERDNRDQARDSSFERRHGERDRRDNRERDQR. Serine 643 is modified (phosphoserine). The stretch at 645–789 forms a coiled coil; that stretch reads IRHQGRNDEL…RDKERERQRD (145 aa). Residues 649-821 are compositionally biased toward basic and acidic residues; sequence GRNDELERDE…NPRDGHDERK (173 aa). Phosphoserine occurs at positions 831, 833, 837, 845, 848, 853, 873, 875, and 877. Positions 881–957 are enriched in basic and acidic residues; sequence LTEDRQGRWK…TSDRAHDENK (77 aa). The residue at position 882 (threonine 882) is a Phosphothreonine. Position 943 is a phosphoserine (serine 943). Basic residues predominate over residues 958–969; the sequence is KKAKIQKKPIKK. Over residues 970–981 the composition is skewed to basic and acidic residues; that stretch reads KKEDDVGIERGN. 5 positions are modified to phosphoserine: serine 986, serine 993, serine 1010, serine 1014, and serine 1017. The span at 996 to 1010 shows a compositional bias: basic residues; it reads KGQKKKSIEKKRKKS. At threonine 1033 the chain carries Phosphothreonine. A compositionally biased stretch (basic and acidic residues) spans 1073–1083; that stretch reads PDRTEVTEAEH. Composition is skewed to low complexity over residues 1084–1100 and 1125–1153; these read TATA…LSSL and AAAT…TFAN. Residues 1163 to 1188 show a composition bias toward basic and acidic residues; that stretch reads TRVEKVETPHVTIEDAQHRKPMDQKR. Phosphothreonine is present on threonine 1170. Residues serine 1191, serine 1194, serine 1208, and serine 1210 each carry the phosphoserine modification. The span at 1213–1223 shows a compositional bias: basic and acidic residues; it reads SAHRSGDDQSG. Position 1230 is a phosphoserine (serine 1230). Basic and acidic residues-rich tracts occupy residues 1231 to 1286 and 1294 to 1379; these read GSRD…DRQV and DSRD…DRTF. Residues 1300–1366 are a coiled coil; that stretch reads QERDRYEHDR…RERERLISDS (67 aa). Phosphoserine is present on residues serine 1364, serine 1366, serine 1382, serine 1386, serine 1406, serine 1409, serine 1438, leucine 1453, glycine 1456, serine 1465, and aspartate 1466. Basic and acidic residues-rich tracts occupy residues 1386 to 1421 and 1429 to 1438; these read SVKR…DKDL and ETNKSERTES.

This sequence belongs to the ZC3H13 family. In terms of assembly, component of the WMM complex, a N6-methyltransferase complex composed of a catalytic subcomplex, named MAC, and of an associated subcomplex, named MACOM. The MAC subcomplex is composed of METTL3 and METTL14. The MACOM subcomplex is composed of WTAP, ZC3H13, CBLL1/HAKAI, VIRMA, and, in some cases of RBM15 (RBM15 or RBM15B). Also a component of a MACOM-like complex, named WTAP complex, composed of WTAP, ZC3H13, CBLL1/HAKAI, VIRMA, RBM15, BCLAF1 and THRAP3.

Its subcellular location is the nucleus speckle. The protein resides in the nucleus. The protein localises to the nucleoplasm. Associated component of the WMM complex, a complex that mediates N6-methyladenosine (m6A) methylation of RNAs, a modification that plays a role in the efficiency of mRNA splicing and RNA processing. Acts as a key regulator of m6A methylation by promoting m6A methylation of mRNAs at the 3'-UTR. Controls embryonic stem cells (ESCs) pluripotency via its role in m6A methylation. In the WMM complex, anchors component of the MACOM subcomplex in the nucleus. Also required for bridging WTAP to the RNA-binding component RBM15 (RBM15 or RBM15B). This chain is Zinc finger CCCH domain-containing protein 13, found in Homo sapiens (Human).